A 303-amino-acid chain; its full sequence is Diaminopimelate epimerase (303 aa).

2 residues coordinate substrate: N15 and N72. The active-site Proton donor is the C81. Residues 82–83 (GN), N169, N202, and 220–221 (ER) contribute to the substrate site. The active-site Proton acceptor is the C229. 230-231 (GT) is a substrate binding site.

Belongs to the diaminopimelate epimerase family. Homodimer.

The protein localises to the cytoplasm. It catalyses the reaction (2S,6S)-2,6-diaminopimelate = meso-2,6-diaminopimelate. It functions in the pathway amino-acid biosynthesis; L-lysine biosynthesis via DAP pathway; DL-2,6-diaminopimelate from LL-2,6-diaminopimelate: step 1/1. In terms of biological role, catalyzes the stereoinversion of LL-2,6-diaminopimelate (L,L-DAP) to meso-diaminopimelate (meso-DAP), a precursor of L-lysine and an essential component of the bacterial peptidoglycan. The sequence is that of Diaminopimelate epimerase from Prochlorococcus marinus (strain MIT 9313).